Here is a 197-residue protein sequence, read N- to C-terminus: Putative eggshell protein (197 aa).

The first 17 residues, 1 to 17 (MKFHLVLLLAIVPLTLA), serve as a signal peptide directing secretion.

The polypeptide is Putative eggshell protein (Fasciola hepatica (Liver fluke)).